Consider the following 1388-residue polypeptide: Rho-associated protein kinase 2 (1388 aa).

Positions 1-24 (MSRPPPTGKMPGAPEAVSGDGAGA) are disordered. A Protein kinase domain is found at 92 to 354 (YDVVKVIGRG…VEEIKQHPFF (263 aa)). Residues 98-106 (IGRGAFGEV) and K121 each bind ATP. D214 serves as the catalytic Proton acceptor. An AGC-kinase C-terminal domain is found at 357-425 (DQWNWDNIRE…YRENLLLSDS (69 aa)). An interaction with PPP1R12A region spans residues 363–784 (NIRETAAPVV…INELLKQKDV (422 aa)). Positions 373 to 420 (PELSSDIDSSNFDDIEDDKGDVETFPIPKAFVGNQLPFIGFTYYRENL) are interaction with NPM1. T414 carries the phosphothreonine; by ROCK2 modification. Coiled-coil stretches lie at residues 439-1025 (NEES…KQLL) and 1053-1131 (DTDV…IGLD). In terms of domain architecture, REM-1 spans 497–573 (TLRQLEREKA…LDETNALLRT (77 aa)). Basic and acidic residues predominate over residues 512–530 (NAEYQRKADHEADKKRNLE). The tract at residues 512 to 532 (NAEYQRKADHEADKKRNLEND) is disordered. Y722 is modified (phosphotyrosine; by SRC). One can recognise a RhoBD domain in the interval 979–1047 (TSDVANLANE…LAEIMNRKEP (69 aa)). The interval 979–1047 (TSDVANLANE…LAEIMNRKEP (69 aa)) is RHOA binding. S1137 is modified (phosphoserine). Residues 1150 to 1349 (ESRLEGWLSL…WVSRLVKKIP (200 aa)) enclose the PH domain. T1212 is modified (phosphothreonine). The segment at 1260-1315 (GHEFIPTLYHFPTNCEACMKPLWHMFKPPPALECRRCHIKCHKDHMDKKEEIIAPC) adopts a Phorbol-ester/DAG-type zinc-finger fold. A disordered region spans residues 1345-1388 (VKKIPKKPPAPDPFARSSPRTSMKIQQNQSIRRPSRQLAPNKPS). S1362 and S1374 each carry phosphoserine. Over residues 1362 to 1376 (SPRTSMKIQQNQSIR) the composition is skewed to polar residues.

Belongs to the protein kinase superfamily. AGC Ser/Thr protein kinase family. Homodimer. Interacts with IRS1. Interacts with RAF1. Interacts with RHOA (activated by GTP). Interacts with RHOB and RHOC. Interacts with PPP1R12A. Interacts with EP300. Interacts with CHORDC1. Interacts with BRCA2. Interacts with NPM1; this interaction enhances ROCK2 activity. Interacts with SORL1. Interacts with PJVK. Mg(2+) serves as cofactor. Autophosphorylated. Phosphorylation at Tyr-722 reduces its binding to RHOA and is crucial for focal adhesion dynamics. Dephosphorylation by PTPN11 stimulates its RHOA binding activity. In terms of processing, cleaved by granzyme B during apoptosis. This leads to constitutive activation of the kinase and membrane blebbing. In terms of tissue distribution, highly expressed in whole brain and in cerebellum, and at lower levels in heart and lung. Detected at low levels in skeletal muscle, spleen, liver, kidney and pancreas.

It is found in the cytoplasm. It localises to the cell membrane. The protein resides in the nucleus. The protein localises to the cytoskeleton. Its subcellular location is the microtubule organizing center. It is found in the centrosome. It catalyses the reaction L-seryl-[protein] + ATP = O-phospho-L-seryl-[protein] + ADP + H(+). It carries out the reaction L-threonyl-[protein] + ATP = O-phospho-L-threonyl-[protein] + ADP + H(+). Its activity is regulated as follows. Activated by RHOA binding. Inhibited by Y-27632. Functionally, protein kinase which is a key regulator of actin cytoskeleton and cell polarity. Involved in regulation of smooth muscle contraction, actin cytoskeleton organization, stress fiber and focal adhesion formation, neurite retraction, cell adhesion and motility via phosphorylation of ADD1, BRCA2, CNN1, EZR, DPYSL2, EP300, MSN, MYL9/MLC2, NPM1, RDX, PPP1R12A and VIM. Phosphorylates SORL1 and IRF4. Acts as a negative regulator of VEGF-induced angiogenic endothelial cell activation. Positively regulates the activation of p42/MAPK1-p44/MAPK3 and of p90RSK/RPS6KA1 during myogenic differentiation. Plays an important role in the timely initiation of centrosome duplication. Inhibits keratinocyte terminal differentiation. May regulate closure of the eyelids and ventral body wall through organization of actomyosin bundles. Plays a critical role in the regulation of spine and synaptic properties in the hippocampus. Plays an important role in generating the circadian rhythm of the aortic myofilament Ca(2+) sensitivity and vascular contractility by modulating the myosin light chain phosphorylation. This is Rho-associated protein kinase 2 (ROCK2) from Bos taurus (Bovine).